Consider the following 396-residue polypeptide: Methionine import ATP-binding protein MetN 2 (396 aa).

The region spanning 41-280 (VSFELVGKVF…PRHGATRALL (240 aa)) is the ABC transporter domain. Residue 77–84 (GRSGAGKS) coordinates ATP.

The protein belongs to the ABC transporter superfamily. Methionine importer (TC 3.A.1.24) family. As to quaternary structure, the complex is composed of two ATP-binding proteins (MetN), two transmembrane proteins (MetI) and a solute-binding protein (MetQ).

It localises to the cell inner membrane. It carries out the reaction L-methionine(out) + ATP + H2O = L-methionine(in) + ADP + phosphate + H(+). The catalysed reaction is D-methionine(out) + ATP + H2O = D-methionine(in) + ADP + phosphate + H(+). In terms of biological role, part of the ABC transporter complex MetNIQ involved in methionine import. Responsible for energy coupling to the transport system. This Burkholderia mallei (strain ATCC 23344) protein is Methionine import ATP-binding protein MetN 2.